Here is a 1615-residue protein sequence, read N- to C-terminus: Mediator of RNA polymerase II transcription subunit 23 (1615 aa).

Disordered regions lie at residues 40 to 67 and 1230 to 1270; these read RQKP…DLPP and SSSS…NASE. The span at 41-51 shows a compositional bias: basic and acidic residues; the sequence is QKPDESLRDPP. The span at 1230–1241 shows a compositional bias: low complexity; sequence SSSSNCSSRSGS.

It belongs to the Mediator complex subunit 23 family. As to quaternary structure, component of the Mediator complex.

The protein localises to the nucleus. In terms of biological role, component of the Mediator complex, a coactivator involved in the regulated transcription of nearly all RNA polymerase II-dependent genes. Mediator functions as a bridge to convey information from gene-specific regulatory proteins to the basal RNA polymerase II transcription machinery. The Mediator complex, having a compact conformation in its free form, is recruited to promoters by direct interactions with regulatory proteins and serves for the assembly of a functional preinitiation complex with RNA polymerase II and the general transcription factors. This Arabidopsis thaliana (Mouse-ear cress) protein is Mediator of RNA polymerase II transcription subunit 23 (MED23).